A 186-amino-acid polypeptide reads, in one-letter code: GMP synthase [glutamine-hydrolyzing] subunit A (186 aa).

Residues 3–186 (MILIINNHGQ…FENFYDVCRS (184 aa)) enclose the Glutamine amidotransferase type-1 domain. Catalysis depends on cysteine 77, which acts as the Nucleophile. Catalysis depends on residues histidine 164 and glutamate 166.

As to quaternary structure, heterodimer composed of a glutamine amidotransferase subunit (A) and a GMP-binding subunit (B).

It carries out the reaction XMP + L-glutamine + ATP + H2O = GMP + L-glutamate + AMP + diphosphate + 2 H(+). Its pathway is purine metabolism; GMP biosynthesis; GMP from XMP (L-Gln route): step 1/1. Functionally, catalyzes the synthesis of GMP from XMP. The protein is GMP synthase [glutamine-hydrolyzing] subunit A of Methanothermobacter thermautotrophicus (strain ATCC 29096 / DSM 1053 / JCM 10044 / NBRC 100330 / Delta H) (Methanobacterium thermoautotrophicum).